The sequence spans 483 residues: Type 2 glycosyltransferase (483 aa).

The chain crosses the membrane as a helical span at residues 21–41; that stretch reads AVVYLSALFTPWFTAFCVLWL. The Dxd motif signature appears at 156–158; sequence DDD. Residues 301–305 carry the QxxxRW motif motif; it reads QCSRW. The N-linked (GlcNAc...) asparagine glycan is linked to N313. 3 helical membrane-spanning segments follow: residues 336 to 356, 369 to 389, and 396 to 416; these read IATFTSLAFVFDFLILAALWW, AIYAQLAFLAFSKVVKLVGLF, and IMFLPVSIIFGYFHGLIKIYA. A glycan (N-linked (GlcNAc...) asparagine) is linked at N421.

It belongs to the GT2 glycosyltransferase family.

It localises to the cell membrane. Its function is as follows. Glycosyltransferase that plays an important role in infection-related morphogenesis and pathogenesis. Involved in stress tolerance and hyphal hydrophobicity via its regulation of the expression of nydrophobin MPG1. May regulate growth, pathogenicity, and cell wall integrity (CWI) through glycosylation of heat shock protein SSB1, and other (unidentified) substrates may contribute to conidiation. Candidate proteins as potential substrates of GT2 include several heat shock proteins (SSB1/MGG_02503, MGG_06759 and MGG_06958), two coiled-coil domain-containing proteins (MGG_04321 and MGG_09571), aminopeptidase 2 (MGG_16472), and a nuclease domain-containing protein (MGG_12646). The sequence is that of Type 2 glycosyltransferase from Pyricularia oryzae (strain 70-15 / ATCC MYA-4617 / FGSC 8958) (Rice blast fungus).